A 517-amino-acid polypeptide reads, in one-letter code: Lysine--tRNA ligase (517 aa).

A disordered region spans residues 1 to 21 (MTEPNRAQAPAQNKAAADTPA). A compositionally biased stretch (low complexity) spans 7–20 (AQAPAQNKAAADTP). Positions 427 and 434 each coordinate Mg(2+).

This sequence belongs to the class-II aminoacyl-tRNA synthetase family. Homodimer. Requires Mg(2+) as cofactor.

It localises to the cytoplasm. The enzyme catalyses tRNA(Lys) + L-lysine + ATP = L-lysyl-tRNA(Lys) + AMP + diphosphate. The chain is Lysine--tRNA ligase from Cupriavidus taiwanensis (strain DSM 17343 / BCRC 17206 / CCUG 44338 / CIP 107171 / LMG 19424 / R1) (Ralstonia taiwanensis (strain LMG 19424)).